Consider the following 1935-residue polypeptide: Rho GTPase-activating protein 21 (1935 aa).

Residues 1–46 (MATRRATVPEQQQQQPSSPGSEISKNKDGQEQSEMVSPTEEEGFCW) form a disordered region. A PDZ domain is found at 78-163 (HTTVKDEENG…TLELSVMPKD (86 aa)). 5 disordered regions span residues 212-237 (VEVP…TTQP), 339-373 (PPSY…PGSH), 413-456 (QNTT…QERL), 673-718 (TSTS…DSNS), and 862-919 (NSKT…DVFS). Polar residues-rich tracts occupy residues 217–237 (SGTS…TTQP), 348–373 (SMFS…PGSH), and 413–429 (QNTT…SSGQ). Low complexity-rich tracts occupy residues 441 to 451 (PQSVQMRQRSV) and 673 to 685 (TSTS…PAHT). Residues 708–718 (SPEANAGDSNS) are compositionally biased toward polar residues. Basic and acidic residues predominate over residues 863 to 884 (SKTERSKSCDEGLDDYKDEGKL). A PH domain is found at 920–1033 (DSNKEGFLYF…WIKAIQENGN (114 aa)). The segment at 1056-1126 (TMMSSSSNKS…KGSWRRIMKK (71 aa)) is disordered. The segment covering 1059–1072 (SSSSNKSEQSPKPS) has biased composition (low complexity). Positions 1097–1119 (PKQESERRLFSKDDISPPKDKGS) are enriched in basic and acidic residues. The region spanning 1140–1332 (VRLDDCPPAH…TLIQQHDWFF (193 aa)) is the Rho-GAP domain. 7 disordered regions span residues 1341–1393 (ITAV…GSGK), 1411–1431 (RKRK…ELDN), 1488–1510 (SEAT…RLPP), 1525–1548 (SMSD…KPKV), 1637–1665 (HRSK…SITP), 1688–1733 (SIRQ…EPEE), and 1838–1925 (SELS…SGTQ). Polar residues predominate over residues 1345 to 1355 (QEESTVESQPV). The segment covering 1376–1393 (SDSASDSAKSKGSWGSGK) has biased composition (low complexity). Composition is skewed to polar residues over residues 1525-1543 (SMSD…SAQR) and 1646-1662 (RNVQ…TEGS). Residues 1691–1705 (QKTDSECSAESKNEE) show a composition bias toward basic and acidic residues. Composition is skewed to polar residues over residues 1872–1889 (QVST…SQGT) and 1898–1911 (NGDS…NNFS).

The protein resides in the golgi apparatus membrane. It is found in the cell junction. It localises to the cytoplasmic vesicle membrane. Its subcellular location is the cytoplasm. The protein localises to the cytoskeleton. Functionally, GTPase-activating protein (GAP) for rhoa and cdc42. In Xenopus tropicalis (Western clawed frog), this protein is Rho GTPase-activating protein 21 (arhgap21).